A 209-amino-acid chain; its full sequence is Outer-membrane lipoprotein LolB (209 aa).

A signal peptide spans 1–17 (MATVFSRALGALVLGVA). Residue C18 is the site of N-palmitoyl cysteine attachment. C18 carries S-diacylglycerol cysteine lipidation.

The protein belongs to the LolB family. In terms of assembly, monomer.

It localises to the cell outer membrane. Functionally, plays a critical role in the incorporation of lipoproteins in the outer membrane after they are released by the LolA protein. This chain is Outer-membrane lipoprotein LolB, found in Ralstonia nicotianae (strain ATCC BAA-1114 / GMI1000) (Ralstonia solanacearum).